We begin with the raw amino-acid sequence, 52 residues long: uncharacterized protein (52 aa).

Residues 3–46 (KIQLESSNQSVLKLEERRLNLTAEIERIYGQMDLKRKELENANL) are a coiled coil.

This is an uncharacterized protein from Dictyostelium discoideum (Social amoeba).